A 281-amino-acid polypeptide reads, in one-letter code: Deoxyribonuclease-1 (281 aa).

The first 21 residues, 1–21, serve as a signal peptide directing secretion; it reads MRSEMLTALLTLAVLLQVAGS. Asparagine 39 carries N-linked (GlcNAc...) asparagine glycosylation. Glutamate 99 is a catalytic residue. Cysteine 122 and cysteine 125 form a disulfide bridge. Histidine 155 is a catalytic residue.

Belongs to the DNase I family. The cofactor is Ca(2+). It depends on Mg(2+) as a cofactor. Equivalent levels in pancreas and parotid gland, low amounts in kidney, liver, small intestine, stomach and thymus.

The protein resides in the secreted. The protein localises to the zymogen granule. It localises to the nucleus envelope. It catalyses the reaction Endonucleolytic cleavage to 5'-phosphodinucleotide and 5'-phosphooligonucleotide end-products.. Serum endocuclease secreted into body fluids by a wide variety of exocrine and endocrine organs. Expressed by non-hematopoietic tissues and preferentially cleaves protein-free DNA. Among other functions, seems to be involved in cell death by apoptosis. Binds specifically to G-actin and blocks actin polymerization. Preferentially attacks double-stranded DNA and produces oligonucleotides with 5'-phospho and 3'-hydroxy termini. Together with DNASE1L3, plays a key role in degrading neutrophil extracellular traps (NETs). NETs are mainly composed of DNA fibers and are released by neutrophils to bind pathogens during inflammation. Degradation of intravascular NETs by DNASE1 and DNASE1L3 is required to prevent formation of clots that obstruct blood vessels and cause organ damage following inflammation. This is Deoxyribonuclease-1 (DNASE1) from Oryctolagus cuniculus (Rabbit).